The following is a 338-amino-acid chain: Anthranilate phosphoribosyltransferase (338 aa).

Residues Gly81, 84 to 85, Ser89, 91 to 94, 109 to 117, and Ala121 each bind 5-phospho-alpha-D-ribose 1-diphosphate; these read GD, NVST, and KHGNRALSS. Anthranilate is bound at residue Gly81. Mg(2+) is bound at residue Ser93. Asn112 lines the anthranilate pocket. Arg167 contacts anthranilate. Mg(2+)-binding residues include Asp226 and Glu227.

Belongs to the anthranilate phosphoribosyltransferase family. As to quaternary structure, homodimer. Requires Mg(2+) as cofactor.

It carries out the reaction N-(5-phospho-beta-D-ribosyl)anthranilate + diphosphate = 5-phospho-alpha-D-ribose 1-diphosphate + anthranilate. The protein operates within amino-acid biosynthesis; L-tryptophan biosynthesis; L-tryptophan from chorismate: step 2/5. Catalyzes the transfer of the phosphoribosyl group of 5-phosphorylribose-1-pyrophosphate (PRPP) to anthranilate to yield N-(5'-phosphoribosyl)-anthranilate (PRA). The chain is Anthranilate phosphoribosyltransferase from Rhodopseudomonas palustris (strain TIE-1).